The primary structure comprises 611 residues: Dual specificity protein phosphatase CDC14AB (611 aa).

The tract at residues 23-178 (DLLGASEFIK…ALQHGFLNFE (156 aa)) is a. The linker stretch occupies residues 179 to 192 (TFDVNEYEHYERVE). The interval 193 to 359 (NGDLNWITPG…HGDSLRSKQR (167 aa)) is b. The Tyrosine-protein phosphatase domain maps to 194-352 (GDLNWITPGK…KQASLWAHGD (159 aa)). Cys-294 acts as the Phosphocysteine intermediate in catalysis. The tract at residues 408-611 (KLRALKGRRQ…PSLQSEYVQY (204 aa)) is disordered. Residues 456–490 (SPLKSSKVPASSSSSSSSSSVSASAKRIGRSSSSS) show a composition bias toward low complexity. Residues 491 to 511 (TNLKSTRLASSLGNLYEPNTE) show a composition bias toward polar residues. The segment covering 512–553 (SISSGKPPSPSSFTPHPVRTTYNYHYEVNNNNNQYSTTSSPS) has biased composition (low complexity). Polar residues-rich tracts occupy residues 554-569 (KSLG…SGAS) and 591-611 (GLST…YVQY).

It belongs to the protein-tyrosine phosphatase family. Non-receptor class CDC14 subfamily.

The protein localises to the nucleus. It localises to the cytoplasm. It is found in the cytoskeleton. Its subcellular location is the microtubule organizing center. The protein resides in the centrosome. The protein localises to the spindle pole. It localises to the spindle. It is found in the cell projection. Its subcellular location is the kinocilium. It carries out the reaction O-phospho-L-tyrosyl-[protein] + H2O = L-tyrosyl-[protein] + phosphate. The enzyme catalyses O-phospho-L-seryl-[protein] + H2O = L-seryl-[protein] + phosphate. The catalysed reaction is O-phospho-L-threonyl-[protein] + H2O = L-threonyl-[protein] + phosphate. In terms of biological role, dual-specificity phosphatase. Required for centrosome separation and productive cytokinesis during cell division. Dephosphorylates SIRT2 around early anaphase. May dephosphorylate the APC subunit FZR1/CDH1, thereby promoting APC-FZR1 dependent degradation of mitotic cyclins and subsequent exit from mitosis. This Danio rerio (Zebrafish) protein is Dual specificity protein phosphatase CDC14AB (cdc14ab).